Consider the following 517-residue polypeptide: Acetylcholine receptor subunit delta (517 aa).

The first 21 residues, 1 to 21 (MEGPVLTLGLLAALAVCGSWG), serve as a signal peptide directing secretion. At 22–245 (LNEEERLIRH…ITFYLIIRRK (224 aa)) the chain is on the extracellular side. Residues Asn-97 and Asn-164 are each glycosylated (N-linked (GlcNAc...) asparagine). Cys-151 and Cys-165 are joined by a disulfide. 3 helical membrane-spanning segments follow: residues 246 to 270 (PLFYIINILVPCVLISFMVNLVFYL), 278 to 299 (TSVAISVLLAQSVFLLLISKRL), and 312 to 333 (FLLFGMVLVTMVVVICVIVLNI). Residues 334–471 (HFRTPSTHVL…WNRVARTVDR (138 aa)) lie on the Cytoplasmic side of the membrane. Tyr-390 is subject to Phosphotyrosine; by Tyr-kinases. Residues 472-490 (LCLFVVTPVMVVGTAWIFL) form a helical membrane-spanning segment.

The protein belongs to the ligand-gated ion channel (TC 1.A.9) family. Acetylcholine receptor (TC 1.A.9.1) subfamily. Delta/CHRND sub-subfamily. In terms of assembly, pentamer of two alpha chains, and one each of the beta, delta, and gamma (in immature muscle) or epsilon (in mature muscle) chains. The muscle heteropentamer composed of alpha-1, beta-1, delta, epsilon subunits interacts with the alpha-conotoxin ImII.

The protein resides in the postsynaptic cell membrane. The protein localises to the cell membrane. It catalyses the reaction K(+)(in) = K(+)(out). It carries out the reaction Na(+)(in) = Na(+)(out). Its function is as follows. After binding acetylcholine, the AChR responds by an extensive change in conformation that affects all subunits and leads to opening of an ion-conducting channel across the plasma membrane. The polypeptide is Acetylcholine receptor subunit delta (Homo sapiens (Human)).